A 386-amino-acid polypeptide reads, in one-letter code: Patatin-T5 (386 aa).

Positions 1 to 23 are cleaved as a signal peptide; that stretch reads MATTNSFTILIFMILATTSSTFA. In terms of domain architecture, PNPLA spans 32-229; it reads LSIDGGGIKG…TVDDPALLSI (198 aa). Residues 36 to 41 carry the GXGXXG motif; sequence GGGIKG. N-linked (GlcNAc...) asparagine glycosylation is present at Asn60. The short motif at 75–79 is the GXSXG element; that stretch reads GTSTG. The Nucleophile role is filled by Ser77. Asn90 and Asn202 each carry an N-linked (GlcNAc...) asparagine glycan. Asp215 functions as the Proton acceptor in the catalytic mechanism. Residues 215 to 217 carry the DGA/G motif; it reads DGA.

The protein belongs to the patatin family. In terms of processing, N-glycosylated. In terms of tissue distribution, tuber and stolon.

The protein resides in the vacuole. Its function is as follows. Probable lipolytic acyl hydrolase (LAH), an activity which is thought to be involved in the response of tubers to pathogens. This Solanum tuberosum (Potato) protein is Patatin-T5.